The sequence spans 156 residues: Probable chemoreceptor glutamine deamidase CheD (156 aa).

Belongs to the CheD family.

It catalyses the reaction L-glutaminyl-[protein] + H2O = L-glutamyl-[protein] + NH4(+). Probably deamidates glutamine residues to glutamate on methyl-accepting chemotaxis receptors (MCPs), playing an important role in chemotaxis. The chain is Probable chemoreceptor glutamine deamidase CheD from Sulfurimonas denitrificans (strain ATCC 33889 / DSM 1251) (Thiomicrospira denitrificans (strain ATCC 33889 / DSM 1251)).